A 241-amino-acid polypeptide reads, in one-letter code: MGFLPFVFPFAELEVGQQLYWQIGNFRIHGQVFMTSWLLIGALLALVVIGTKKMERDPRGVQNLLEFLWDYIRDLARTQIGEKVYRDWMPFIGTLFLFIFVSNWGGALVPWKLIKLPSGELGAPTADINTTVALALLVSLSYFYAGLSNKGLRYFEYYVHPTPIMLPFKIVEDFTKPLSLSFRLFGNILADELVVAVLVFLVPLVLPVPVMFLGLFTSAIQALIFATLAAYYIGEAVEEHH.

A run of 5 helical transmembrane segments spans residues 30–50, 91–111, 128–148, 193–213, and 214–234; these read GQVF…VVIG, FIGT…LVPW, INTT…AGLS, LVVA…VMFL, and GLFT…YYIG.

Belongs to the ATPase A chain family. In terms of assembly, F-type ATPases have 2 components, CF(1) - the catalytic core - and CF(0) - the membrane proton channel. CF(1) has five subunits: alpha(3), beta(3), gamma(1), delta(1), epsilon(1). CF(0) has four main subunits: a, b, b' and c.

It localises to the cellular thylakoid membrane. Functionally, key component of the proton channel; it plays a direct role in the translocation of protons across the membrane. In Prochlorococcus marinus (strain NATL1A), this protein is ATP synthase subunit a.